The primary structure comprises 642 residues: 1,4-alpha-glucan branching enzyme GlgB (642 aa).

D304 functions as the Nucleophile in the catalytic mechanism. E355 functions as the Proton donor in the catalytic mechanism.

It belongs to the glycosyl hydrolase 13 family. GlgB subfamily. As to quaternary structure, monomer.

It carries out the reaction Transfers a segment of a (1-&gt;4)-alpha-D-glucan chain to a primary hydroxy group in a similar glucan chain.. It participates in glycan biosynthesis; glycogen biosynthesis. Functionally, catalyzes the formation of the alpha-1,6-glucosidic linkages in glycogen by scission of a 1,4-alpha-linked oligosaccharide from growing alpha-1,4-glucan chains and the subsequent attachment of the oligosaccharide to the alpha-1,6 position. The sequence is that of 1,4-alpha-glucan branching enzyme GlgB from Streptococcus pneumoniae serotype 4 (strain ATCC BAA-334 / TIGR4).